A 126-amino-acid polypeptide reads, in one-letter code: Large ribosomal subunit protein bL12 (126 aa).

This sequence belongs to the bacterial ribosomal protein bL12 family. In terms of assembly, homodimer. Part of the ribosomal stalk of the 50S ribosomal subunit. Forms a multimeric L10(L12)X complex, where L10 forms an elongated spine to which 2 to 4 L12 dimers bind in a sequential fashion. Binds GTP-bound translation factors.

Its function is as follows. Forms part of the ribosomal stalk which helps the ribosome interact with GTP-bound translation factors. Is thus essential for accurate translation. This Methylobacterium sp. (strain 4-46) protein is Large ribosomal subunit protein bL12.